Reading from the N-terminus, the 394-residue chain is Phosphoglycerate kinase (394 aa).

Residues 21 to 23, Arg-36, 59 to 62, Arg-118, and Arg-151 each bind substrate; these read DFN and HMGR. ATP contacts are provided by residues Lys-202, Glu-324, and 350–353; that span reads GGDS.

Belongs to the phosphoglycerate kinase family. As to quaternary structure, monomer.

It is found in the cytoplasm. The catalysed reaction is (2R)-3-phosphoglycerate + ATP = (2R)-3-phospho-glyceroyl phosphate + ADP. It participates in carbohydrate degradation; glycolysis; pyruvate from D-glyceraldehyde 3-phosphate: step 2/5. The protein is Phosphoglycerate kinase of Exiguobacterium sibiricum (strain DSM 17290 / CCUG 55495 / CIP 109462 / JCM 13490 / 255-15).